A 649-amino-acid polypeptide reads, in one-letter code: Acetyl-coenzyme A synthetase (649 aa).

CoA contacts are provided by residues 191-194 (RGGR), threonine 311, and asparagine 335. ATP contacts are provided by residues 387–389 (GEP), 411–416 (DTWWQT), aspartate 500, and arginine 515. A CoA-binding site is contributed by serine 523. Arginine 526 lines the ATP pocket. Residues valine 537, histidine 539, and isoleucine 542 each contribute to the Mg(2+) site. Arginine 584 serves as a coordination point for CoA. An N6-acetyllysine modification is found at lysine 609.

Belongs to the ATP-dependent AMP-binding enzyme family. Requires Mg(2+) as cofactor. Acetylated. Deacetylation by the SIR2-homolog deacetylase activates the enzyme.

It catalyses the reaction acetate + ATP + CoA = acetyl-CoA + AMP + diphosphate. In terms of biological role, catalyzes the conversion of acetate into acetyl-CoA (AcCoA), an essential intermediate at the junction of anabolic and catabolic pathways. AcsA undergoes a two-step reaction. In the first half reaction, AcsA combines acetate with ATP to form acetyl-adenylate (AcAMP) intermediate. In the second half reaction, it can then transfer the acetyl group from AcAMP to the sulfhydryl group of CoA, forming the product AcCoA. The sequence is that of Acetyl-coenzyme A synthetase from Psychromonas ingrahamii (strain DSM 17664 / CCUG 51855 / 37).